The primary structure comprises 190 residues: UPF0301 protein Pden_0436 (190 aa).

Belongs to the UPF0301 (AlgH) family.

In Paracoccus denitrificans (strain Pd 1222), this protein is UPF0301 protein Pden_0436.